A 187-amino-acid polypeptide reads, in one-letter code: Probable chemoreceptor glutamine deamidase CheD 1 (187 aa).

The protein belongs to the CheD family.

The enzyme catalyses L-glutaminyl-[protein] + H2O = L-glutamyl-[protein] + NH4(+). In terms of biological role, probably deamidates glutamine residues to glutamate on methyl-accepting chemotaxis receptors (MCPs), playing an important role in chemotaxis. This chain is Probable chemoreceptor glutamine deamidase CheD 1, found in Ruegeria sp. (strain TM1040) (Silicibacter sp.).